The following is a 203-amino-acid chain: HTH-type transcriptional regulator CymR (203 aa).

One can recognise an HTH tetR-type domain in the interval Met-13–Ile-73. The segment at residues Arg-36–Phe-55 is a DNA-binding region (H-T-H motif).

Its function is as follows. Involved in the repression of the cym and cmt operons which are responsible of the p-cymene degradation. This is HTH-type transcriptional regulator CymR from Pseudomonas putida (Arthrobacter siderocapsulatus).